A 221-amino-acid polypeptide reads, in one-letter code: Small histidine-alanine-rich protein (221 aa).

A signal peptide spans 1–21 (MVSFSKNKILSAAVFASVLLL). Positions 52–67 (AHAGDAHHAHHVADAH) are enriched in basic and acidic residues. Disordered stretches follow at residues 52–141 (AHAG…AANA) and 180–221 (AHHD…HLHH). Tandem repeats lie at residues 57–59 (AHH) and 60–62 (AHH). Residues 57-68 (AHHAHHVADAHH) form a 4 X 3 AA approximate tandem repeats of A-H-H region. The stretch at 63 to 65 (VAD) is one 1-3; approximate repeat. 13 consecutive repeat copies span residues 66-68 (AHH), 69-74 (AHHAAN), 75-80 (AHHAAN), 81-86 (AHHAAN), 87-92 (AHHAAN), 93-98 (AHHAAN), 99-104 (AHHAAN), 105-110 (AHHAAN), 111-116 (AHHAAN), 117-122 (AHHAAN), 123-128 (AHHAAN), 129-134 (AHHAAN), and 135-140 (AHHAAN). The tract at residues 69-146 (AHHAANAHHA…HAANAHHAAD (78 aa)) is 13 X 6 AA approximate tandem repeats of A-H-H-A-A-N. The span at 75–141 (AHHAANAHHA…AANAHHAANA (67 aa)) shows a compositional bias: low complexity. The stretch at 141 to 146 (AHHAAD) is one 2-13; approximate repeat. 7 consecutive repeat copies span residues 176–180 (HHDDA), 181–185 (HHDGA), 186–190 (HHDDA), 191–195 (HHDGA), 196–200 (HHDGA), 201–205 (HHDGA), and 206–210 (HHDGA). The segment at 176–210 (HHDDAHHDGAHHDDAHHDGAHHDGAHHDGAHHDGA) is 7 X 5 AA tandem repeats of H-H-D-[DG]-A. Basic and acidic residues predominate over residues 180–211 (AHHDGAHHDDAHHDGAHHDGAHHDGAHHDGAH).

The polypeptide is Small histidine-alanine-rich protein (Plasmodium falciparum (isolate FC27 / Papua New Guinea)).